A 250-amino-acid polypeptide reads, in one-letter code: Probable transcriptional regulatory protein ROP_68700 (250 aa).

This sequence belongs to the TACO1 family.

It localises to the cytoplasm. This chain is Probable transcriptional regulatory protein ROP_68700, found in Rhodococcus opacus (strain B4).